The chain runs to 256 residues: Cytokine-inducible SH2-containing protein (256 aa).

The SH2 domain occupies 81-162 (WYWGSITASE…PDVVSLVQHY (82 aa)). The disordered stretch occupies residues 168–190 (ADTRSDSPDPAPTPALPVSKPDA). Positions 207-255 (KLVQPFVRRSSARSLQHLCRLVINRLVTDVDCLPLPRRMADYLRQYPFQ) constitute an SOCS box domain.

In terms of assembly, stably associated with the tyrosine-phosphorylated IL3 receptor beta chain and tyrosine-phosphorylated EPO receptor (EPOR).

The protein operates within protein modification; protein ubiquitination. In terms of biological role, SOCS family proteins form part of a classical negative feedback system that regulates cytokine signal transduction. CIS is involved in the negative regulation of cytokines that signal through the JAK-STAT5 pathway such as erythropoietin, prolactin and interleukin 3 (IL3) receptor. Inhibits STAT5 trans-activation by suppressing its tyrosine phosphorylation. May be a substrate recognition component of a SCF-like ECS (Elongin BC-CUL2/5-SOCS-box protein) E3 ubiquitin-protein ligase complex which mediates the ubiquitination and subsequent proteasomal degradation of target proteins. This Rattus norvegicus (Rat) protein is Cytokine-inducible SH2-containing protein (Cish).